The chain runs to 314 residues: Olfactory receptor 1E1 (314 aa).

Over 1–25 the chain is Extracellular; the sequence is MMGQNQTSISDFLLLGLPIQPEQQN. N5 carries N-linked (GlcNAc...) asparagine glycosylation. Residues 26–49 traverse the membrane as a helical segment; the sequence is LCYALFLAMYLTTLLGNLLIIVLI. At 50-57 the chain is on the cytoplasmic side; the sequence is RLDSHLHT. The helical transmembrane segment at 58–79 threads the bilayer; it reads PMYLFLSNLSFSDLCFSSVTIP. At 80 to 100 the chain is on the extracellular side; the sequence is KLLQNMQNQDPSIPYADCLTQ. Residues 101–120 traverse the membrane as a helical segment; sequence MYFFLLFGDLESFLLVAMAY. The Cytoplasmic portion of the chain corresponds to 121 to 139; the sequence is DRYVAICFPLHYTAIMSPM. The helical transmembrane segment at 140–158 threads the bilayer; it reads LCLALVALSWVLTTFHAML. Topologically, residues 159 to 195 are extracellular; the sequence is HTLLMARLCFCADNVIPHFFCDMSALLKLAFSDTRVN. Residues 196–219 form a helical membrane-spanning segment; that stretch reads EWVIFIMGGLILVIPFLLILGSYA. Residues 220 to 236 lie on the Cytoplasmic side of the membrane; that stretch reads RIVSSILKVPSSKGICK. The chain crosses the membrane as a helical span at residues 237–259; it reads AFSTCGSHLSVVSLFYGTVIGLY. Residues 260–272 are Extracellular-facing; it reads LCSSANSSTLKDT. A helical membrane pass occupies residues 273-292; the sequence is VMAMMYTVVTPMLNPFIYSL. Over 293–314 the chain is Cytoplasmic; the sequence is RNRDMKGALSRVIHQKKTFFSL.

This sequence belongs to the G-protein coupled receptor 1 family.

The protein resides in the cell membrane. In terms of biological role, odorant receptor. This chain is Olfactory receptor 1E1 (OR1E1), found in Homo sapiens (Human).